The following is a 174-amino-acid chain: Ribosome maturation factor RimM (174 aa).

The PRC barrel domain occupies 98 to 171 (EDEFYFHEII…KIKIHVMEGL (74 aa)).

It belongs to the RimM family. Binds ribosomal protein uS19.

It localises to the cytoplasm. An accessory protein needed during the final step in the assembly of 30S ribosomal subunit, possibly for assembly of the head region. Essential for efficient processing of 16S rRNA. May be needed both before and after RbfA during the maturation of 16S rRNA. It has affinity for free ribosomal 30S subunits but not for 70S ribosomes. This Bacillus velezensis (strain DSM 23117 / BGSC 10A6 / LMG 26770 / FZB42) (Bacillus amyloliquefaciens subsp. plantarum) protein is Ribosome maturation factor RimM.